Reading from the N-terminus, the 398-residue chain is Homeobox protein knotted-1-like 1 (398 aa).

3 disordered regions span residues Thr43 to His69, Glu172 to Leu192, and Asn234 to Glu277. Residues Ser49–Gly58 are compositionally biased toward gly residues. Residues Glu280–Leu300 enclose the ELK domain. Residues Ser301–Ser364 constitute a DNA-binding region (homeobox; TALE-type).

Belongs to the TALE/KNOX homeobox family. Expressed only in the stems.

The protein localises to the nucleus. In terms of biological role, probably binds to the DNA sequence 5'-TGAC-3'. The chain is Homeobox protein knotted-1-like 1 from Malus domestica (Apple).